The primary structure comprises 193 residues: Probable nicotinate-nucleotide adenylyltransferase (193 aa).

It belongs to the NadD family.

The enzyme catalyses nicotinate beta-D-ribonucleotide + ATP + H(+) = deamido-NAD(+) + diphosphate. It participates in cofactor biosynthesis; NAD(+) biosynthesis; deamido-NAD(+) from nicotinate D-ribonucleotide: step 1/1. Functionally, catalyzes the reversible adenylation of nicotinate mononucleotide (NaMN) to nicotinic acid adenine dinucleotide (NaAD). This chain is Probable nicotinate-nucleotide adenylyltransferase, found in Chlorobium phaeovibrioides (strain DSM 265 / 1930) (Prosthecochloris vibrioformis (strain DSM 265)).